Consider the following 156-residue polypeptide: 3-dehydroquinate dehydratase (156 aa).

The active-site Proton acceptor is Y24. Residues N76, H82, and D89 each coordinate substrate. The active-site Proton donor is the H102. Substrate is bound by residues 103–104 (IS) and R113.

The protein belongs to the type-II 3-dehydroquinase family. In terms of assembly, homododecamer.

The enzyme catalyses 3-dehydroquinate = 3-dehydroshikimate + H2O. It participates in metabolic intermediate biosynthesis; chorismate biosynthesis; chorismate from D-erythrose 4-phosphate and phosphoenolpyruvate: step 3/7. Its function is as follows. Catalyzes a trans-dehydration via an enolate intermediate. This Nitrobacter winogradskyi (strain ATCC 25391 / DSM 10237 / CIP 104748 / NCIMB 11846 / Nb-255) protein is 3-dehydroquinate dehydratase.